The sequence spans 140 residues: Nucleoside diphosphate kinase (140 aa).

6 residues coordinate ATP: lysine 11, phenylalanine 59, arginine 87, threonine 93, arginine 104, and asparagine 114. The active-site Pros-phosphohistidine intermediate is the histidine 117.

The protein belongs to the NDK family. Homotetramer. Mg(2+) is required as a cofactor.

Its subcellular location is the cytoplasm. The enzyme catalyses a 2'-deoxyribonucleoside 5'-diphosphate + ATP = a 2'-deoxyribonucleoside 5'-triphosphate + ADP. The catalysed reaction is a ribonucleoside 5'-diphosphate + ATP = a ribonucleoside 5'-triphosphate + ADP. In terms of biological role, major role in the synthesis of nucleoside triphosphates other than ATP. The ATP gamma phosphate is transferred to the NDP beta phosphate via a ping-pong mechanism, using a phosphorylated active-site intermediate. The polypeptide is Nucleoside diphosphate kinase (Roseobacter denitrificans (strain ATCC 33942 / OCh 114) (Erythrobacter sp. (strain OCh 114))).